A 1300-amino-acid polypeptide reads, in one-letter code: Zinc finger protein 536 (1300 aa).

Disordered regions lie at residues 1–26 (MEEA…GPVL) and 47–77 (FPEL…GQPM). Residues 48–69 (PELHPRPNPEEKPPASLEEKAH) show a composition bias toward basic and acidic residues. 6 C2H2-type zinc fingers span residues 130-152 (YPCP…MRTH), 158-180 (FKCP…LRTH), 274-297 (FRCT…RILH), 300-323 (YKCT…EKAH), 345-367 (FRCE…MRKH), and 373-395 (HCCQ…MKVH). Disordered stretches follow at residues 584 to 604 (HSTK…LESS) and 650 to 739 (SRVH…QQPA). A compositionally biased stretch (basic and acidic residues) spans 594–604 (LPSKLDPLESS). Residues 631–653 (TECPDCGRVFRTYHQVVVHSRVH) form a C2H2-type 7 zinc finger. Over residues 657 to 674 (RKGEEDGLHVGLDERRGS) the composition is skewed to basic and acidic residues. A compositionally biased stretch (polar residues) spans 675–696 (GSDQESQSVSRSTTPGSSNVTE). 2 C2H2-type zinc fingers span residues 751 to 773 (KDCP…LRIH) and 779 to 801 (YKCP…LERH). Residues 802 to 826 (HRERQNGAGPLSGQPPNQDHKDEMS) are disordered. Ser-826 and Ser-827 each carry phosphoserine. The segment covering 856 to 880 (SQQWTSGVLSSGDHSGQATGMSSEV) has biased composition (polar residues). Disordered stretches follow at residues 856–893 (SQQW…LPSK), 937–985 (KDKA…PDAA), and 1124–1260 (SGAS…SLDK). Composition is skewed to basic and acidic residues over residues 950–972 (HGVD…EKSQ) and 1133–1143 (KEPDGKAHSEE). 2 stretches are compositionally biased toward acidic residues: residues 1160 to 1170 (DLSDIASSEDM) and 1178 to 1187 (NDEEDVETEP). The segment covering 1194-1209 (LSALSKDSSSDGGDSL) has biased composition (low complexity).

The protein belongs to the krueppel C2H2-type zinc-finger protein family.

It is found in the nucleus. In terms of biological role, transcriptional repressor that negatively regulates neuron differentiation by repressing retinoic acid-induced gene transcription. Binds and interrupts RARA from binding to retinoic acid response elements (RARE) composed of tandem 5'-AGGTCA-3' sites known as DR1-DR5. Recognizes and binds 2 copies of the core DNA sequence 5'-CCCCCA-3'. This is Zinc finger protein 536 (ZNF536) from Homo sapiens (Human).